The chain runs to 245 residues: MMKTLVVVLSLSLTILSFGGAHAATISFKNNCPYMVWPGTLTSDQKPQLSTTGFELASQASFQLDTPVPWNGRFWARTGCSTDASGKFVCATADCASGQVMCNGNGAIPPATLAEFNIPAGGGQDFYDVSLVDGFNLPMSVTPQGGTGDCKTASCPANVNAVCPSELQKKGSDGSVVACLSACVKFGTPQYCCTPPQNTPETCPPTNYSEIFHNACPDAYSYAYDDKRGTFTCNGGPNYAITFCP.

An N-terminal signal peptide occupies residues 1–23 (MMKTLVVVLSLSLTILSFGGAHA). Disulfide bonds link Cys-32/Cys-244, Cys-80/Cys-90, Cys-95/Cys-102, Cys-150/Cys-233, Cys-155/Cys-216, Cys-163/Cys-179, Cys-183/Cys-192, and Cys-193/Cys-203.

The protein belongs to the thaumatin family. In terms of tissue distribution, abundantly expressed in ripening fruit.

The protein resides in the secreted. It carries out the reaction Hydrolysis of (1-&gt;3)-beta-D-glucosidic linkages in (1-&gt;3)-beta-D-glucans.. This Prunus avium (Cherry) protein is Glucan endo-1,3-beta-glucosidase.